Reading from the N-terminus, the 369-residue chain is Histidinol-phosphate aminotransferase 2 (369 aa).

At lysine 231 the chain carries N6-(pyridoxal phosphate)lysine.

Belongs to the class-II pyridoxal-phosphate-dependent aminotransferase family. Histidinol-phosphate aminotransferase subfamily. As to quaternary structure, homodimer. Pyridoxal 5'-phosphate serves as cofactor.

It catalyses the reaction L-histidinol phosphate + 2-oxoglutarate = 3-(imidazol-4-yl)-2-oxopropyl phosphate + L-glutamate. It functions in the pathway amino-acid biosynthesis; L-histidine biosynthesis; L-histidine from 5-phospho-alpha-D-ribose 1-diphosphate: step 7/9. This chain is Histidinol-phosphate aminotransferase 2, found in Legionella pneumophila (strain Lens).